A 497-amino-acid polypeptide reads, in one-letter code: MAEEDLRRTRLEKAEQWRVHNQNPYPYRYERTHMAGDLQAKYKDLENGQEVEDAVSVAGRIVARRVLGSVAFFGLQDDSGTIQLYFDKKRIRESMGADAFKWLDKLTDTGDFIGAHGTIRRTERGELSVYVHEYELLCKSILPLPSEYYGLTDVQKRYRQRYLDLIANPGVRETFRKRALIVREIRRFLDERGFLEIETPVLQTEAGGAAARPFTTHHNALGLDMFLRIATELHLKRLVVGGFEKVYELGRIFRNEGISTRHNPEFTTVEIYEAYSDYFDIMDLVETLLRAVAHIVLGSTELVCEGNTIDLGAPFRRITMFDLVAQMTGVALAGLRDGEKAARLAEAVGVEVTAGASVGQILYQLFEEKCEAKLTQPTFVLDYPVEISPLAKAHRSVPNMVERFELYINGRETADGFSELNDPVDQRARLEAQAKAKAAGDLEAHPFDEDFLTAIEHGLPPTGGVGIGIDRLVMLLTDSPSIRDVIAFPTLRPEAGE.

Mg(2+) is bound by residues Glu405 and Glu412.

This sequence belongs to the class-II aminoacyl-tRNA synthetase family. As to quaternary structure, homodimer. The cofactor is Mg(2+).

The protein resides in the cytoplasm. It carries out the reaction tRNA(Lys) + L-lysine + ATP = L-lysyl-tRNA(Lys) + AMP + diphosphate. The protein is Lysine--tRNA ligase of Gloeobacter violaceus (strain ATCC 29082 / PCC 7421).